The sequence spans 250 residues: L-ascorbate peroxidase 1, cytosolic (250 aa).

His-42 (proton acceptor) is an active-site residue. The segment at 113–137 is disordered; it reads VPFHPGREDKPAPPPEGRLPDATKG. Position 163 (His-163) interacts with heme b. 4 residues coordinate K(+): Thr-164, Thr-180, Asn-182, and Asp-187.

It belongs to the peroxidase family. Ascorbate peroxidase subfamily. Heme b serves as cofactor.

The protein localises to the cytoplasm. It carries out the reaction L-ascorbate + H2O2 = L-dehydroascorbate + 2 H2O. In terms of biological role, plays a key role in hydrogen peroxide removal. This Oryza sativa subsp. indica (Rice) protein is L-ascorbate peroxidase 1, cytosolic (APX1).